The following is a 685-amino-acid chain: E3 ubiquitin ligase Rnf157 (685 aa).

G2 carries N-myristoyl glycine lipidation. An RING-type zinc finger spans residues E276–C315. Positions R329–L332 match the D-box 1 motif. Disordered stretches follow at residues S339–P361, L433–Q584, and L650–A672. The segment covering S434–V443 has biased composition (low complexity). Over residues E478–G537 the composition is skewed to polar residues. The span at P552–P561 shows a compositional bias: low complexity. The D-box 2 signature appears at A657–R660.

Interacts with APBB1. Interacts with CHD1; CHD1-binding controls RNF157 stability. Also interacts with ATRN, MEGF8, TECR, MSI2, PLRG1, BYSL, MTERF3, PSMA1, MRPS18B, PRPF4, FASTKD2, SLC25A1, SMU1, CNOT9, MRPS2, MAGT1, FXR2, EMD, PSMD8, HDAC1, RAN, HSD17B12, TXNDC5 and MRPL19.

It is found in the cytoplasm. It catalyses the reaction S-ubiquitinyl-[E2 ubiquitin-conjugating enzyme]-L-cysteine + [acceptor protein]-L-lysine = [E2 ubiquitin-conjugating enzyme]-L-cysteine + N(6)-ubiquitinyl-[acceptor protein]-L-lysine.. Functionally, E3 ubiquitin ligase that ubiquitinates APBB1 for its degradation by the proteasome and thus prevents apoptosis and promotes survival of neurons. Has a dual role in neurons as it is also required for dendrite growth and maintenance for which its ligase activity is not critical. May act as a scaffold molecule to regulate this process. Acts as a downstream effector of the interconnected PI3K and MAPK signaling pathways and thus participates in the regulation of the cell cycle. This Mus musculus (Mouse) protein is E3 ubiquitin ligase Rnf157 (Rnf157).